The following is a 383-amino-acid chain: Probable butyrate kinase (383 aa).

This sequence belongs to the acetokinase family.

It localises to the cytoplasm. The catalysed reaction is butanoate + ATP = butanoyl phosphate + ADP. This is Probable butyrate kinase from Deinococcus radiodurans (strain ATCC 13939 / DSM 20539 / JCM 16871 / CCUG 27074 / LMG 4051 / NBRC 15346 / NCIMB 9279 / VKM B-1422 / R1).